The following is a 336-amino-acid chain: Quinolinate synthase (336 aa).

Iminosuccinate is bound by residues His25 and Ser42. A [4Fe-4S] cluster-binding site is contributed by Cys86. Iminosuccinate is bound by residues 117 to 119 (YIN) and Ser138. [4Fe-4S] cluster is bound at residue Cys198. Iminosuccinate is bound by residues 224 to 226 (HPE) and Thr241. Cys288 contacts [4Fe-4S] cluster.

This sequence belongs to the quinolinate synthase family. Type 3 subfamily. [4Fe-4S] cluster serves as cofactor.

The protein resides in the cytoplasm. The catalysed reaction is iminosuccinate + dihydroxyacetone phosphate = quinolinate + phosphate + 2 H2O + H(+). It participates in cofactor biosynthesis; NAD(+) biosynthesis; quinolinate from iminoaspartate: step 1/1. Catalyzes the condensation of iminoaspartate with dihydroxyacetone phosphate to form quinolinate. This Helicobacter pylori (strain ATCC 700392 / 26695) (Campylobacter pylori) protein is Quinolinate synthase.